A 1014-amino-acid polypeptide reads, in one-letter code: Klotho (1014 aa).

The signal sequence occupies residues 1 to 34; that stretch reads MPARAPPRRLPRLLLLRLLSLHLLLLTLRARCLS. The Extracellular portion of the chain corresponds to 35-983; sequence AEPGQGAQTW…GCGFFQTRKS (949 aa). Glycosyl hydrolase-1 stretches follow at residues 59–508 and 517–955; these read LHDT…NNGF and LEGT…NNGF. Residues Asn161, Asn285, Asn346, Asn609, Asn614, and Asn696 are each glycosylated (N-linked (GlcNAc...) asparagine). A helical transmembrane segment spans residues 984–1004; sequence LLAFISFLVFAFVTSLALIYY. At 1005–1014 the chain is on the cytoplasmic side; it reads YSKKGRRRYK.

It belongs to the glycosyl hydrolase 1 family. Klotho subfamily. Homodimer. Interacts with FGF23 and FGFR1. N-glycosylated. Present in cortical renal tubules and the parathyroid (at protein level). Strongly expressed in kidney. Expressed at low levels in brain, lung, intestine and ovaries.

The protein resides in the cell membrane. The protein localises to the apical cell membrane. Its subcellular location is the secreted. It carries out the reaction a beta-D-glucuronoside + H2O = D-glucuronate + an alcohol. Its function is as follows. May have weak glycosidase activity towards glucuronylated steroids. However, it lacks essential active site Glu residues at positions 241 and 874, suggesting it may be inactive as a glycosidase in vivo. May be involved in the regulation of calcium and phosphorus homeostasis by inhibiting the synthesis of active vitamin D. Essential factor for the specific interaction between FGF23 and FGFR1. The Klotho peptide generated by cleavage of the membrane-bound isoform may be an anti-aging circulating hormone which would extend life span by inhibiting insulin/IGF1 signaling. The protein is Klotho (Kl) of Rattus norvegicus (Rat).